A 93-amino-acid chain; its full sequence is Cytochrome c oxidase polypeptide 6, mitochondrial (93 aa).

The Mitochondrial matrix segment spans residues 2 to 33 (STGNESYNLRYPKGFKGYPYNMYKLEGYGTPK). The helical transmembrane segment at 34 to 53 (GYITLIGVVATLTVSGLFFA) threads the bilayer. Residues 54–93 (KTRSNKREYPTHNKEWRAKTLAYAKETNADPIYQLPKDKI) lie on the Mitochondrial intermembrane side of the membrane.

Belongs to the cytochrome c oxidase IV family. Component of the cytochrome c oxidase (complex IV, CIV), a multisubunit enzyme composed of a catalytic core of 3 subunits and seevral supernumerary subunits. The complex exists as a monomer or a dimer and forms supercomplexes (SCs) in the inner mitochondrial membrane with ubiquinol-cytochrome c oxidoreductase (cytochrome b-c1 complex, complex III, CIII).

Its subcellular location is the mitochondrion inner membrane. It participates in energy metabolism; oxidative phosphorylation. In terms of biological role, component of the cytochrome c oxidase, the last enzyme in the mitochondrial electron transport chain which drives oxidative phosphorylation. The respiratory chain contains 3 multisubunit complexes succinate dehydrogenase (complex II, CII), ubiquinol-cytochrome c oxidoreductase (cytochrome b-c1 complex, complex III, CIII) and cytochrome c oxidase (complex IV, CIV), that cooperate to transfer electrons derived from NADH and succinate to molecular oxygen, creating an electrochemical gradient over the inner membrane that drives transmembrane transport and the ATP synthase. Cytochrome c oxidase is the component of the respiratory chain that catalyzes the reduction of oxygen to water. Electrons originating from reduced cytochrome c in the intermembrane space (IMS) are transferred via the dinuclear copper A center (CU(A)) of subunit 2 and heme A of subunit 1 to the active site in subunit 1, a binuclear center (BNC) formed by heme A3 and copper B (CU(B)). The BNC reduces molecular oxygen to 2 water molecules using 4 electrons from cytochrome c in the IMS and 4 protons from the mitochondrial matrix. This Dictyostelium discoideum (Social amoeba) protein is Cytochrome c oxidase polypeptide 6, mitochondrial (cxfA).